Here is a 216-residue protein sequence, read N- to C-terminus: Thymidylate kinase (216 aa).

Residue 10-17 participates in ATP binding; it reads GIDGCGKT.

This sequence belongs to the thymidylate kinase family.

It carries out the reaction dTMP + ATP = dTDP + ADP. Phosphorylation of dTMP to form dTDP in both de novo and salvage pathways of dTTP synthesis. The protein is Thymidylate kinase of Prochlorococcus marinus (strain MIT 9313).